The primary structure comprises 129 residues: MAKRTVATKKRVVKVDVKGQLHIHSSFNNIIVTITNDEGQVISWSSSGKMGFRSSKKNTPYAAQMAAQDCAKVAYDLGMRKVKAYVKGPGNGRESAIRMVHNVGIEVTEIIDVTPLPHNGCRPPKGRRV.

This sequence belongs to the universal ribosomal protein uS11 family. As to quaternary structure, part of the 30S ribosomal subunit. Interacts with proteins S7 and S18. Binds to IF-3.

In terms of biological role, located on the platform of the 30S subunit, it bridges several disparate RNA helices of the 16S rRNA. Forms part of the Shine-Dalgarno cleft in the 70S ribosome. The protein is Small ribosomal subunit protein uS11 of Azobacteroides pseudotrichonymphae genomovar. CFP2.